The chain runs to 99 residues: CLAVATA3/ESR (CLE)-related protein 41 (99 aa).

An N-terminal signal peptide occupies residues Met-1–Thr-34. A disordered region spans residues Ala-60–Asn-99. Residues Ala-70–Arg-79 show a composition bias toward basic residues. Residues Arg-80–Glu-89 show a composition bias toward basic and acidic residues. Pro-91 and Pro-94 each carry hydroxyproline. Residue Pro-94 is glycosylated (O-linked (Ara...) hydroxyproline).

Belongs to the CLV3/ESR signal peptide family. In terms of assembly, CLE41p interacts specifically with the leucine-rich repeat receptor-like protein kinase TDR. Post-translationally, the O-glycosylation (arabinosylation) of the hydroxyproline Pro-94 enhances binding affinity of the CLE41p peptide for its receptor. As to expression, mostly expressed in inflorescence and roots, and, to a lower extent, in seedlings, flowers, leaves and siliques. Observed along the vascular strands in cotyledons, leaves and roots, but not in shoot apical meristems (SAM). Restricted to the phloem and the neighboring pericycle cells in the roots and hypocotyls.

It is found in the secreted. The protein resides in the extracellular space. Functionally, extracellular signal peptide that regulates cell fate. May act with TDR as a ligand-receptor pair in a signal transduction pathway that represses tracheary element differentiation but promotes the formation of procambial cells adjacent to phloem cells in the veins in an auxin-dependent manner. Regulates the transition of protophloem cells from proliferation to differentiation, thus impinging on postembryonic growth capacity of the root meristem; this signaling pathway requires CRN and CLV2. This Arabidopsis thaliana (Mouse-ear cress) protein is CLAVATA3/ESR (CLE)-related protein 41.